A 444-amino-acid polypeptide reads, in one-letter code: N-succinylarginine dihydrolase (444 aa).

Substrate-binding positions include 19 to 28 (AGLSFGNVAS), Asn-110, and 137 to 138 (HR). Residue Glu-174 is part of the active site. Arg-214 provides a ligand contact to substrate. His-250 is an active-site residue. Substrate contacts are provided by Asp-252 and Asn-362. Catalysis depends on Cys-368, which acts as the Nucleophile.

Belongs to the succinylarginine dihydrolase family. Homodimer.

It carries out the reaction N(2)-succinyl-L-arginine + 2 H2O + 2 H(+) = N(2)-succinyl-L-ornithine + 2 NH4(+) + CO2. It functions in the pathway amino-acid degradation; L-arginine degradation via AST pathway; L-glutamate and succinate from L-arginine: step 2/5. In terms of biological role, catalyzes the hydrolysis of N(2)-succinylarginine into N(2)-succinylornithine, ammonia and CO(2). The sequence is that of N-succinylarginine dihydrolase from Shewanella baltica (strain OS223).